The sequence spans 62 residues: Protein YnfQ (62 aa).

Belongs to the YmcF/YnqF peptide family.

This is Protein YnfQ from Escherichia coli (strain K12).